Reading from the N-terminus, the 99-residue chain is MAVFRSTLVLLLIIVCLTTYELHVHAADGAKVGEGVVKIDCGGRCKDRCSKSSRTKLCLRACNSCCSRCNCVPPGTSGNTHLCPCYASITTHGGRLKCP.

Positions 1-26 (MAVFRSTLVLLLIIVCLTTYELHVHA) are cleaved as a signal peptide.

This sequence belongs to the GASA family. In terms of processing, six disulfide bonds may be present. As to expression, dry seeds and maturating siliques.

It is found in the secreted. Gibberellin-regulated protein that may function in hormonal controlled steps of development such as seed germination, flowering and seed maturation. This Arabidopsis thaliana (Mouse-ear cress) protein is Gibberellin-regulated protein 2 (GASA2).